A 94-amino-acid chain; its full sequence is Integration host factor subunit beta (94 aa).

This sequence belongs to the bacterial histone-like protein family. In terms of assembly, heterodimer of an alpha and a beta chain.

Its function is as follows. This protein is one of the two subunits of integration host factor, a specific DNA-binding protein that functions in genetic recombination as well as in transcriptional and translational control. This Mesorhizobium japonicum (strain LMG 29417 / CECT 9101 / MAFF 303099) (Mesorhizobium loti (strain MAFF 303099)) protein is Integration host factor subunit beta.